We begin with the raw amino-acid sequence, 360 residues long: Histidinol-phosphate aminotransferase (360 aa).

An N6-(pyridoxal phosphate)lysine modification is found at K218.

Belongs to the class-II pyridoxal-phosphate-dependent aminotransferase family. Histidinol-phosphate aminotransferase subfamily. In terms of assembly, homodimer. Pyridoxal 5'-phosphate serves as cofactor.

The catalysed reaction is L-histidinol phosphate + 2-oxoglutarate = 3-(imidazol-4-yl)-2-oxopropyl phosphate + L-glutamate. It participates in amino-acid biosynthesis; L-histidine biosynthesis; L-histidine from 5-phospho-alpha-D-ribose 1-diphosphate: step 7/9. The sequence is that of Histidinol-phosphate aminotransferase from Chlorobium phaeobacteroides (strain DSM 266 / SMG 266 / 2430).